The chain runs to 415 residues: MGTQFRKALTLTVTNFSQKSSPINSPPFPSGGCNWYIKFYPKGSADDNYLSLFLSPDDPKSLGLNWKRRANFYFVLLNQSGKELHRTPEIGDQWFCDDSLSWGFPQTLPRKKLLDKIFLDNDRFNIEIYIKVIEVVEGYHMFPASFTNKLLRSSLEYPDKSEKETVDINGFKVLSSQVTSVKRIFEEHPDIAEDFRSKNQVVKTEYMSVLLRVIETMAKPPQSISETELSNVHSELTELTEVGFKLEWLKAKLEEVCVAFKKANADGCRIQQLEEHVKNLEQTVSDLKVEMDKEKAKSTAKVLSLEDTLSDLKTELGKEKAKNATATDKFLLLKDTYSDLKVELEKEKAKSTSAAAKVLSLKEALSDLKVELDDQKIVNSATTANVLSWEDDDDLFSHTNCLGIQQKTNAYKRIN.

Residues 6-130 form the MATH domain; the sequence is RKALTLTVTN…NDRFNIEIYI (125 aa). The stretch at 244-341 forms a coiled coil; that stretch reads FKLEWLKAKL…LLKDTYSDLK (98 aa).

The sequence is that of MATH domain and coiled-coil domain-containing protein At2g42465 from Arabidopsis thaliana (Mouse-ear cress).